A 379-amino-acid polypeptide reads, in one-letter code: Armadillo repeat-containing X-linked protein 3 (379 aa).

Topologically, residues 1-6 (MGYARK) are mitochondrial intermembrane. Mitochondrion outer membrane (MOM)-targeting sequence stretches follow at residues 1–6 (MGYARK) and 26–37 (RLTRGRKQNKEK). A helical; Signal-anchor transmembrane segment spans residues 7 to 29 (VGWVTAGLVIGAGACYCIYRLTR). The Cytoplasmic segment spans residues 30-379 (GRKQNKEKMA…AEHMFPKSQE (350 aa)). 3 positions are modified to phosphoserine: serine 61, serine 67, and serine 72. The segment at 89 to 98 (RARARARARA) is nuclear localization signal. A compositionally biased stretch (basic residues) spans 95–106 (RARATRARRAVQ). The interval 95-116 (RARATRARRAVQKRASPNSDDT) is disordered. At serine 110 the chain carries Phosphoserine. 3 ARM repeats span residues 111–151 (PNSD…NNAA), 153–192 (AFNRDIIRDLGGLPIVAKILNTRDPIVKEKALIVLNNLSV), and 233–272 (VTNEYQHMLANSISDFFRLFSAGNEETKLQVLKLLLNLAE).

The protein belongs to the eutherian X-chromosome-specific Armcx family. In terms of assembly, interacts (via ARM domain) with MIRO1, MIRO2 and TRAK2. The interaction with Miro is calcium-dependent. Interacts with SOX10.

The protein localises to the mitochondrion outer membrane. Its subcellular location is the cytoplasm. It is found in the nucleus. Functionally, regulates mitochondrial aggregation and transport in axons in living neurons. May link mitochondria to the TRAK2-kinesin motor complex via its interaction with Miro and TRAK2. Mitochondrial distribution and dynamics is regulated through ARMCX3 protein degradation, which is promoted by PCK and negatively regulated by WNT1. Enhances the SOX10-mediated transactivation of the neuronal acetylcholine receptor subunit alpha-3 and beta-4 subunit gene promoters. This Homo sapiens (Human) protein is Armadillo repeat-containing X-linked protein 3 (ARMCX3).